The following is a 524-amino-acid chain: CDC50-related protein CDC50.1 (524 aa).

Composition is skewed to polar residues over residues 1–19 (MGEN…SQFS) and 26–39 (TLSS…QQSL). Disordered stretches follow at residues 1 to 40 (MGEN…QSLP) and 52 to 86 (APSV…DAGS). Topologically, residues 1 to 181 (MGENSTTGLR…GMYPLWSAGV (181 aa)) are cytoplasmic. The segment covering 67-80 (GSSRLTSRGTSLSS) has biased composition (low complexity). The helical transmembrane segment at 182 to 202 (VLRLCLLGALFFVSVGAWLIF) threads the bilayer. Residues 203–473 (EDEQHVECKL…VQKSRLGGRS (271 aa)) lie on the Extracellular side of the membrane. N-linked (GlcNAc...) asparagine glycans are attached at residues Asn-297 and Asn-339. A helical membrane pass occupies residues 474 to 494 (LFIGIAYLSFGCLLTMLVFYM). Residues 495–524 (LWKKWQYRREGEEIRDLRWQTKTRGSKKTK) are Cytoplasmic-facing.

This sequence belongs to the CDC50/LEM3 family. Interacts with GC; the interaction regulates guanylate cyclase GC trafficking and sensing environmental changes.

The protein localises to the membrane. In terms of biological role, in tachyzoites, required for the cellular trafficking of guanylate cyclase GC and UGO to the cell membrane. May play a role in the folding of the GC P-type ATPase-like domain to sense vacuolar changes in phosphatidic acid and pH levels which trigger parasite egress. The sequence is that of CDC50-related protein CDC50.1 from Toxoplasma gondii (strain ATCC 50853 / GT1).